The primary structure comprises 157 residues: Protein Smg homolog (157 aa).

The protein belongs to the Smg family.

The polypeptide is Protein Smg homolog (Shewanella sediminis (strain HAW-EB3)).